A 296-amino-acid chain; its full sequence is Diheme cytochrome c-type (296 aa).

Residues Cys-52, Cys-55, His-56, Cys-202, Cys-205, and His-206 each contribute to the heme c site.

In terms of processing, binds 2 heme c groups covalently per subunit.

It localises to the cell membrane. Particularly expressed when cells generate energy via aerobic respiration. This is Diheme cytochrome c-type (cycG) from Cereibacter sphaeroides (strain ATCC 17023 / DSM 158 / JCM 6121 / CCUG 31486 / LMG 2827 / NBRC 12203 / NCIMB 8253 / ATH 2.4.1.) (Rhodobacter sphaeroides).